The chain runs to 488 residues: Ribulose bisphosphate carboxylase large chain (488 aa).

Positions 127 and 177 each coordinate substrate. Lysine 179 functions as the Proton acceptor in the catalytic mechanism. Lysine 181 contributes to the substrate binding site. The Mg(2+) site is built by lysine 205, aspartate 207, and glutamate 208. N6-carboxylysine is present on lysine 205. The active-site Proton acceptor is histidine 297. Positions 298, 330, and 382 each coordinate substrate.

The protein belongs to the RuBisCO large chain family. Type I subfamily. Heterohexadecamer of 8 large chains and 8 small chains. The cofactor is Mg(2+).

The protein localises to the plastid. It localises to the chloroplast. The catalysed reaction is 2 (2R)-3-phosphoglycerate + 2 H(+) = D-ribulose 1,5-bisphosphate + CO2 + H2O. It carries out the reaction D-ribulose 1,5-bisphosphate + O2 = 2-phosphoglycolate + (2R)-3-phosphoglycerate + 2 H(+). RuBisCO catalyzes two reactions: the carboxylation of D-ribulose 1,5-bisphosphate, the primary event in carbon dioxide fixation, as well as the oxidative fragmentation of the pentose substrate in the photorespiration process. Both reactions occur simultaneously and in competition at the same active site. This Emiliania huxleyi (Coccolithophore) protein is Ribulose bisphosphate carboxylase large chain.